Consider the following 1017-residue polypeptide: Formin-binding protein 4 (1017 aa).

2 disordered regions span residues 1 to 141 (MGKK…STDI) and 160 to 202 (PAAP…TSGW). At serine 18 the chain carries Phosphoserine. A compositionally biased stretch (low complexity) spans 40 to 69 (DSTAAVPSQPAPSAATTTTTAVTAAAASDD). Serine 116 and serine 124 each carry phosphoserine. Positions 130–141 (SKETNGNQSTDI) are enriched in polar residues. Threonine 172 carries the phosphothreonine modification. Over residues 181–200 (AATSTLSSSTSNGTDSTQTS) the composition is skewed to low complexity. The region spanning 214-248 (GIEMGDWQEVWDENTGCYYYWNTQTNEVTWELPQY) is the WW 1 domain. Lysine 290 carries the N6-acetyllysine modification. Lysine 301 participates in a covalent cross-link: Glycyl lysine isopeptide (Lys-Gly) (interchain with G-Cter in SUMO1). Lysine 335 is covalently cross-linked (Glycyl lysine isopeptide (Lys-Gly) (interchain with G-Cter in SUMO2)). Lysine 348 is covalently cross-linked (Glycyl lysine isopeptide (Lys-Gly) (interchain with G-Cter in SUMO1); alternate). Lysine 348 is covalently cross-linked (Glycyl lysine isopeptide (Lys-Gly) (interchain with G-Cter in SUMO2); alternate). Disordered stretches follow at residues 421-519 (LEEG…TTPK), 621-676 (ESQW…CKES), 706-792 (PLPL…IKRK), and 899-994 (TATI…AERN). Phosphoserine is present on residues serine 427, serine 432, serine 435, serine 438, and serine 442. Residues 428–442 (VSGSSPRSDISQPAS) are compositionally biased toward polar residues. The span at 449–458 (LMSKRGKWKM) shows a compositional bias: basic residues. Residues 461–474 (RATSPESTSRSSSK) show a composition bias toward low complexity. A Phosphoserine modification is found at serine 464. At threonine 479 the chain carries Phosphothreonine. Residues 491-513 (NSEKIDENSDKEMEVEESPEKIK) are compositionally biased toward basic and acidic residues. Residues serine 499 and serine 508 each carry the phosphoserine modification. Phosphothreonine occurs at positions 516 and 517. Residue lysine 519 forms a Glycyl lysine isopeptide (Lys-Gly) (interchain with G-Cter in SUMO1); alternate linkage. Lysine 519 is covalently cross-linked (Glycyl lysine isopeptide (Lys-Gly) (interchain with G-Cter in SUMO2); alternate). The region spanning 595–629 (NATPKGWSCHWDRDHRRYFYVNEQSGESQWEFPDG) is the WW 2 domain. Residues 627–637 (PDGEEEEEESQ) show a composition bias toward acidic residues. A compositionally biased stretch (basic and acidic residues) spans 640 to 656 (ENRDETLAKQTLKDKTG). Over residues 657-671 (TDSNSTESSETSTGS) the composition is skewed to low complexity. Residues 706–732 (PLPLEMPPPPPPPPESPPPPPPPPPPA) show a composition bias toward pro residues. The span at 733–748 (EDGEIQEVEMEDEGSE) shows a compositional bias: acidic residues. Residues 764–786 (SAQTTVVTSQSSVDSTISSSSST) show a composition bias toward low complexity. Residues 904-925 (EPPPPPPPPPPPPPPAPKMPPP) are compositionally biased toward pro residues. Residues 929–941 (KKGRKDKAKKSKT) are compositionally biased toward basic residues. Residues 957–970 (LDEEDNSSSSEEDR) are compositionally biased toward acidic residues. Phosphoserine occurs at positions 963, 964, and 965. Basic and acidic residues predominate over residues 971-982 (ESTAQKRIEEWK).

In terms of assembly, binds FMN1. Interacts with the Arg/Gly-rich-flanked Pro-rich of KHDRBS1/SAM68. Arginine methylation in these regions has no effect on this binding. In terms of tissue distribution, highly expressed in the eye.

This chain is Formin-binding protein 4 (FNBP4), found in Homo sapiens (Human).